The sequence spans 275 residues: Type III pantothenate kinase (275 aa).

ATP is bound at residue 6–13 (DAGNTNIV). 108 to 111 (GADR) contacts substrate. Aspartate 110 functions as the Proton acceptor in the catalytic mechanism. K(+) is bound at residue aspartate 130. Threonine 133 lines the ATP pocket. Threonine 187 lines the substrate pocket.

Belongs to the type III pantothenate kinase family. Homodimer. Requires NH4(+) as cofactor. K(+) is required as a cofactor.

The protein resides in the cytoplasm. The enzyme catalyses (R)-pantothenate + ATP = (R)-4'-phosphopantothenate + ADP + H(+). Its pathway is cofactor biosynthesis; coenzyme A biosynthesis; CoA from (R)-pantothenate: step 1/5. In terms of biological role, catalyzes the phosphorylation of pantothenate (Pan), the first step in CoA biosynthesis. The sequence is that of Type III pantothenate kinase from Zymomonas mobilis subsp. mobilis (strain ATCC 31821 / ZM4 / CP4).